The chain runs to 156 residues: Protein OXIDATIVE STRESS 3 LIKE 3 (156 aa).

Positions 1–67 are disordered; it reads MHYQEQMESL…GLSKHYKGKS (67 aa). Residues 13–26 are compositionally biased toward basic and acidic residues; sequence GEERRRGNYTRDVD.

The protein localises to the nucleus. Its function is as follows. Promotes slightly the tolerance to oxidizing chemicals (e.g. diamide). The chain is Protein OXIDATIVE STRESS 3 LIKE 3 from Arabidopsis thaliana (Mouse-ear cress).